A 180-amino-acid polypeptide reads, in one-letter code: NAD(P)H-quinone oxidoreductase subunit I, chloroplastic (180 aa).

4Fe-4S ferredoxin-type domains are found at residues 55–84 and 95–124; these read GRIH…VDWR and LNYS…MTEE. [4Fe-4S] cluster is bound by residues cysteine 64, cysteine 67, cysteine 70, cysteine 74, cysteine 104, cysteine 107, cysteine 110, and cysteine 114.

It belongs to the complex I 23 kDa subunit family. As to quaternary structure, NDH is composed of at least 16 different subunits, 5 of which are encoded in the nucleus. The cofactor is [4Fe-4S] cluster.

The protein resides in the plastid. It localises to the chloroplast thylakoid membrane. The catalysed reaction is a plastoquinone + NADH + (n+1) H(+)(in) = a plastoquinol + NAD(+) + n H(+)(out). The enzyme catalyses a plastoquinone + NADPH + (n+1) H(+)(in) = a plastoquinol + NADP(+) + n H(+)(out). NDH shuttles electrons from NAD(P)H:plastoquinone, via FMN and iron-sulfur (Fe-S) centers, to quinones in the photosynthetic chain and possibly in a chloroplast respiratory chain. The immediate electron acceptor for the enzyme in this species is believed to be plastoquinone. Couples the redox reaction to proton translocation, and thus conserves the redox energy in a proton gradient. The polypeptide is NAD(P)H-quinone oxidoreductase subunit I, chloroplastic (Triticum aestivum (Wheat)).